Consider the following 286-residue polypeptide: Protein HEXIM2 (286 aa).

Positions 1–11 (MMATPNQTACN) are enriched in polar residues. The interval 1–195 (MMATPNQTAC…GEFQRKDFSE (195 aa)) is disordered. Ser29 is modified (phosphoserine). Thr32 carries the post-translational modification Phosphothreonine. Ser39 carries the post-translational modification Phosphoserine. Thr46 carries the phosphothreonine modification. Phosphoserine is present on residues Ser51, Ser53, Ser71, Ser76, and Ser81. Residues 68–78 (NSRSPRTQSPG) are compositionally biased toward polar residues. Positions 87–103 (ARKKHRRRPSKRKRHWR) are enriched in basic residues. Residues 113 to 132 (KQQRDERQSQRASRVREEMF) show a composition bias toward basic and acidic residues. An interaction with P-TEFb region spans residues 140–143 (PYNT). The span at 178 to 195 (SDGRGRAHGEFQRKDFSE) shows a compositional bias: basic and acidic residues. The stretch at 207–277 (GRSKQELVRD…QENQMWNREG (71 aa)) forms a coiled coil. The interval 226-286 (QAEEETRRLQ…GCRCDEEPGT (61 aa)) is interaction with CCNT1, HEXIM1 and HEXIM2.

It belongs to the HEXIM family. Homooligomer and heterooligomer with HEXIM1; probably dimeric. Core component of the 7SK RNP complex, at least composed of 7SK RNA, LARP7, MEPCE, HEXIM1 (or HEXIM2) and P-TEFb (composed of CDK9 and CCNT1/cyclin-T1). Interacts with CCNT2. Ubiquitously expressed with higher expression in testis. HEXIM1 and HEXIM2 are differentially expressed.

The protein resides in the nucleus. In terms of biological role, transcriptional regulator which functions as a general RNA polymerase II transcription inhibitor. Core component of the 7SK RNP complex: in cooperation with 7SK snRNA sequesters P-TEFb in a large inactive 7SK snRNP complex preventing RNA polymerase II phosphorylation and subsequent transcriptional elongation. The chain is Protein HEXIM2 (HEXIM2) from Homo sapiens (Human).